A 71-amino-acid polypeptide reads, in one-letter code: DNA-directed RNA polymerase subunit omega (71 aa).

This sequence belongs to the RNA polymerase subunit omega family. As to quaternary structure, the RNAP catalytic core consists of 2 alpha, 1 beta, 1 beta' and 1 omega subunit. When a sigma factor is associated with the core the holoenzyme is formed, which can initiate transcription.

It catalyses the reaction RNA(n) + a ribonucleoside 5'-triphosphate = RNA(n+1) + diphosphate. Promotes RNA polymerase assembly. Latches the N- and C-terminal regions of the beta' subunit thereby facilitating its interaction with the beta and alpha subunits. This Alkaliphilus oremlandii (strain OhILAs) (Clostridium oremlandii (strain OhILAs)) protein is DNA-directed RNA polymerase subunit omega.